Reading from the N-terminus, the 201-residue chain is FMN-dependent NADH:quinone oxidoreductase (201 aa).

Residues serine 9 and 16-18 contribute to the FMN site; that span reads SYS.

This sequence belongs to the azoreductase type 1 family. In terms of assembly, homodimer. It depends on FMN as a cofactor.

It catalyses the reaction 2 a quinone + NADH + H(+) = 2 a 1,4-benzosemiquinone + NAD(+). It carries out the reaction N,N-dimethyl-1,4-phenylenediamine + anthranilate + 2 NAD(+) = 2-(4-dimethylaminophenyl)diazenylbenzoate + 2 NADH + 2 H(+). In terms of biological role, quinone reductase that provides resistance to thiol-specific stress caused by electrophilic quinones. Functionally, also exhibits azoreductase activity. Catalyzes the reductive cleavage of the azo bond in aromatic azo compounds to the corresponding amines. This Mesomycoplasma hyopneumoniae (strain 7448) (Mycoplasma hyopneumoniae) protein is FMN-dependent NADH:quinone oxidoreductase.